The primary structure comprises 108 residues: Small ribosomal subunit protein eS25B (108 aa).

Residues M1–G20 are compositionally biased toward low complexity. The tract at residues M1 to K30 is disordered. P2 is modified (n,N-dimethylproline; by NTM1). A compositionally biased stretch (basic residues) spans K21 to K30.

Belongs to the eukaryotic ribosomal protein eS25 family. In terms of assembly, component of the small ribosomal subunit (SSU). Mature yeast ribosomes consist of a small (40S) and a large (60S) subunit. The 40S small subunit contains 1 molecule of ribosomal RNA (18S rRNA) and 33 different proteins (encoded by 57 genes). The large 60S subunit contains 3 rRNA molecules (25S, 5.8S and 5S rRNA) and 46 different proteins (encoded by 81 genes).

Its subcellular location is the cytoplasm. Functionally, component of the ribosome, a large ribonucleoprotein complex responsible for the synthesis of proteins in the cell. The small ribosomal subunit (SSU) binds messenger RNAs (mRNAs) and translates the encoded message by selecting cognate aminoacyl-transfer RNA (tRNA) molecules. The large subunit (LSU) contains the ribosomal catalytic site termed the peptidyl transferase center (PTC), which catalyzes the formation of peptide bonds, thereby polymerizing the amino acids delivered by tRNAs into a polypeptide chain. The nascent polypeptides leave the ribosome through a tunnel in the LSU and interact with protein factors that function in enzymatic processing, targeting, and the membrane insertion of nascent chains at the exit of the ribosomal tunnel. This Saccharomyces cerevisiae (strain ATCC 204508 / S288c) (Baker's yeast) protein is Small ribosomal subunit protein eS25B.